Here is a 241-residue protein sequence, read N- to C-terminus: Large ribosomal subunit protein bL25 (241 aa).

A disordered region spans residues 214 to 241; the sequence is LDAVKAGEEGSRAQQETEEASERADQGQ.

The protein belongs to the bacterial ribosomal protein bL25 family. CTC subfamily. As to quaternary structure, part of the 50S ribosomal subunit; part of the 5S rRNA/L5/L18/L25 subcomplex. Contacts the 5S rRNA. Binds to the 5S rRNA independently of L5 and L18.

In terms of biological role, this is one of the proteins that binds to the 5S RNA in the ribosome where it forms part of the central protuberance. The polypeptide is Large ribosomal subunit protein bL25 (Deinococcus geothermalis (strain DSM 11300 / CIP 105573 / AG-3a)).